A 446-amino-acid chain; its full sequence is MSKKLYIKTYGCQMNVYDSVKMQDLLYPYGYEPTENIEEADVIILNTCHIREKAAEKTYSELGRIKKLQDARKKQGLNSAIIVVAGCVAQAEGEEIFTRTPYVDIVVGPQSYYNLPELISKVVRHEKHLIDLDFVEEAKFDQLPEQLYPQGASSFISVQEGCDKFCTFCVVPYTRGAEFSRNVEQVYREALKVVSSGAKEIMLLGQNVNAYHGKTSDDKVFTLADLIRHLVKIPNLERLRYTTSHPIDMTDDLISLHGLEPKLMPFLHLPVQSGSNKTLKAMNRKHDRDYYFDIIDRLRKARADIVLSSDFIVGFPGETDEDFADTLDLVRKVKYGQCYSFKYSPRPGTPGATRTDQVPEHIKSERLTILQKELAAQQLAFNESCIGSTMKVLFDRDGKFDDQIIGKTPYMQSVYIKNPNKDLLGKIIEVKITKAALNSLSGEIYR.

One can recognise an MTTase N-terminal domain in the interval 3-124; sequence KKLYIKTYGC…LPELISKVVR (122 aa). [4Fe-4S] cluster contacts are provided by Cys12, Cys48, Cys87, Cys162, Cys166, and Cys169. In terms of domain architecture, Radical SAM core spans 148-380; it reads YPQGASSFIS…QKELAAQQLA (233 aa). A TRAM domain is found at 383–446; sequence ESCIGSTMKV…LNSLSGEIYR (64 aa).

This sequence belongs to the methylthiotransferase family. MiaB subfamily. As to quaternary structure, monomer. [4Fe-4S] cluster is required as a cofactor.

The protein resides in the cytoplasm. It catalyses the reaction N(6)-dimethylallyladenosine(37) in tRNA + (sulfur carrier)-SH + AH2 + 2 S-adenosyl-L-methionine = 2-methylsulfanyl-N(6)-dimethylallyladenosine(37) in tRNA + (sulfur carrier)-H + 5'-deoxyadenosine + L-methionine + A + S-adenosyl-L-homocysteine + 2 H(+). In terms of biological role, catalyzes the methylthiolation of N6-(dimethylallyl)adenosine (i(6)A), leading to the formation of 2-methylthio-N6-(dimethylallyl)adenosine (ms(2)i(6)A) at position 37 in tRNAs that read codons beginning with uridine. The polypeptide is tRNA-2-methylthio-N(6)-dimethylallyladenosine synthase (Rickettsia bellii (strain OSU 85-389)).